Reading from the N-terminus, the 116-residue chain is Ribulose bisphosphate carboxylase small subunit 1 (116 aa).

It belongs to the RuBisCO small chain family. In terms of assembly, heterohexadecamer of 8 large and 8 small subunits.

Its subcellular location is the cytoplasm. RuBisCO catalyzes two reactions: the carboxylation of D-ribulose 1,5-bisphosphate, the primary event in carbon dioxide fixation, as well as the oxidative fragmentation of the pentose substrate. Both reactions occur simultaneously and in competition at the same active site. Although the small subunit is not catalytic it is essential for maximal activity. Functionally, can replace the endogenous type I ccbS gene in H.neapolitanus, reconstituting RuBisCO with about 10% of normal activity; the active enzyme is targeted to carboxysomes. The sequence is that of Ribulose bisphosphate carboxylase small subunit 1 from Hydrogenovibrio crunogenus (strain DSM 25203 / XCL-2) (Thiomicrospira crunogena).